Consider the following 34-residue polypeptide: Omega/M-ectatotoxin-Et1a subunit B (34 aa).

An intrachain disulfide couples cysteine 10 to cysteine 32.

The protein belongs to the ectatomin family. Ectatomin-Et subfamily. As to quaternary structure, heterodimer of an A and a B chain; disulfide-linked. As to expression, expressed by the venom gland.

It localises to the secreted. It is found in the target cell membrane. Its function is as follows. Algogenic for animals, human and insects. At high concentrations (0.5-1 uM), it acts as a pore-forming protein that forms nonselective cation channels both in cell and artificial membranes. It is weakly selective for cation over anions channel conductance is identical in both directions. At lower concentrations (1-10 nM), this heterodimer inhibits cardiac L-type calcium currents in isolated rat cardiac ventricular myocytes. This Ectatomma tuberculatum (Selva ant) protein is Omega/M-ectatotoxin-Et1a subunit B.